We begin with the raw amino-acid sequence, 520 residues long: 2-isopropylmalate synthase (520 aa).

In terms of domain architecture, Pyruvate carboxyltransferase spans 12–274; it reads VVIFDTTLRD…DTGIDTTMLT (263 aa). Mn(2+) contacts are provided by Asp21, His209, His211, and Asn245. Residues 398–520 are regulatory domain; that stretch reads KLLSLSVIAG…RLHAQHAAVV (123 aa).

It belongs to the alpha-IPM synthase/homocitrate synthase family. LeuA type 1 subfamily. Homodimer. The cofactor is Mn(2+).

The protein localises to the cytoplasm. The enzyme catalyses 3-methyl-2-oxobutanoate + acetyl-CoA + H2O = (2S)-2-isopropylmalate + CoA + H(+). Its pathway is amino-acid biosynthesis; L-leucine biosynthesis; L-leucine from 3-methyl-2-oxobutanoate: step 1/4. Functionally, catalyzes the condensation of the acetyl group of acetyl-CoA with 3-methyl-2-oxobutanoate (2-ketoisovalerate) to form 3-carboxy-3-hydroxy-4-methylpentanoate (2-isopropylmalate). This Methylorubrum populi (strain ATCC BAA-705 / NCIMB 13946 / BJ001) (Methylobacterium populi) protein is 2-isopropylmalate synthase.